Consider the following 461-residue polypeptide: Bifunctional protein GlmU (461 aa).

The interval 1 to 236 (MNVLLQELFI…VFEIFGINNR (236 aa)) is pyrophosphorylase. UDP-N-acetyl-alpha-D-glucosamine is bound by residues K27, Q80, 85-86 (GT), 109-111 (YGD), G146, E160, N175, and N234. Residue D111 participates in Mg(2+) binding. N234 provides a ligand contact to Mg(2+). The interval 237-257 (FQLMKLEKIYQIEQAKKLLLN) is linker. An N-acetyltransferase region spans residues 258 to 461 (GVTLSDYNRF…SILRKENNSK (204 aa)). UDP-N-acetyl-alpha-D-glucosamine is bound at residue K358. The Proton acceptor role is filled by H370. Residues Y373 and N384 each coordinate UDP-N-acetyl-alpha-D-glucosamine. The acetyl-CoA site is built by A387, A430, and R447.

This sequence in the N-terminal section; belongs to the N-acetylglucosamine-1-phosphate uridyltransferase family. The protein in the C-terminal section; belongs to the transferase hexapeptide repeat family. In terms of assembly, homotrimer. Mg(2+) is required as a cofactor.

It localises to the cytoplasm. It catalyses the reaction alpha-D-glucosamine 1-phosphate + acetyl-CoA = N-acetyl-alpha-D-glucosamine 1-phosphate + CoA + H(+). The catalysed reaction is N-acetyl-alpha-D-glucosamine 1-phosphate + UTP + H(+) = UDP-N-acetyl-alpha-D-glucosamine + diphosphate. Its pathway is nucleotide-sugar biosynthesis; UDP-N-acetyl-alpha-D-glucosamine biosynthesis; N-acetyl-alpha-D-glucosamine 1-phosphate from alpha-D-glucosamine 6-phosphate (route II): step 2/2. It functions in the pathway nucleotide-sugar biosynthesis; UDP-N-acetyl-alpha-D-glucosamine biosynthesis; UDP-N-acetyl-alpha-D-glucosamine from N-acetyl-alpha-D-glucosamine 1-phosphate: step 1/1. It participates in bacterial outer membrane biogenesis; LPS lipid A biosynthesis. Functionally, catalyzes the last two sequential reactions in the de novo biosynthetic pathway for UDP-N-acetylglucosamine (UDP-GlcNAc). The C-terminal domain catalyzes the transfer of acetyl group from acetyl coenzyme A to glucosamine-1-phosphate (GlcN-1-P) to produce N-acetylglucosamine-1-phosphate (GlcNAc-1-P), which is converted into UDP-GlcNAc by the transfer of uridine 5-monophosphate (from uridine 5-triphosphate), a reaction catalyzed by the N-terminal domain. This chain is Bifunctional protein GlmU, found in Wigglesworthia glossinidia brevipalpis.